Consider the following 185-residue polypeptide: uncharacterized protein (185 aa).

The protein belongs to the PIGL family.

This is an uncharacterized protein from Escherichia coli (strain K12).